The following is a 100-amino-acid chain: Urease subunit gamma (100 aa).

It belongs to the urease gamma subunit family. Heterotrimer of UreA (gamma), UreB (beta) and UreC (alpha) subunits. Three heterotrimers associate to form the active enzyme.

The protein localises to the cytoplasm. It carries out the reaction urea + 2 H2O + H(+) = hydrogencarbonate + 2 NH4(+). It participates in nitrogen metabolism; urea degradation; CO(2) and NH(3) from urea (urease route): step 1/1. In Opitutus terrae (strain DSM 11246 / JCM 15787 / PB90-1), this protein is Urease subunit gamma.